A 261-amino-acid chain; its full sequence is Cytochrome c oxidase subunit 3 (261 aa).

Residues methionine 1–proline 15 lie on the Mitochondrial matrix side of the membrane. A helical membrane pass occupies residues tryptophan 16–tryptophan 34. Residues phenylalanine 35 to threonine 40 lie on the Mitochondrial intermembrane side of the membrane. The helical transmembrane segment at threonine 41 to threonine 66 threads the bilayer. The Mitochondrial matrix portion of the chain corresponds to phenylalanine 67–threonine 72. Residues proline 73–serine 105 form a helical membrane-spanning segment. Residues leucine 106 to glutamate 128 are Mitochondrial intermembrane-facing. The chain crosses the membrane as a helical span at residues valine 129–methionine 152. Residues glutamate 153–asparagine 155 are Mitochondrial matrix-facing. The helical transmembrane segment at arginine 156–glutamate 183 threads the bilayer. At alanine 184 to aspartate 190 the chain is on the mitochondrial intermembrane side. The helical transmembrane segment at glycine 191–leucine 223 threads the bilayer. The Mitochondrial matrix portion of the chain corresponds to lysine 224–histidine 232. Residues phenylalanine 233–isoleucine 256 form a helical membrane-spanning segment. Residues tyrosine 257–serine 261 lie on the Mitochondrial intermembrane side of the membrane.

The protein belongs to the cytochrome c oxidase subunit 3 family. Component of the cytochrome c oxidase (complex IV, CIV), a multisubunit enzyme composed of 14 subunits. The complex is composed of a catalytic core of 3 subunits MT-CO1, MT-CO2 and MT-CO3, encoded in the mitochondrial DNA, and 11 supernumerary subunits COX4I, COX5A, COX5B, COX6A, COX6B, COX6C, COX7A, COX7B, COX7C, COX8 and NDUFA4, which are encoded in the nuclear genome. The complex exists as a monomer or a dimer and forms supercomplexes (SCs) in the inner mitochondrial membrane with NADH-ubiquinone oxidoreductase (complex I, CI) and ubiquinol-cytochrome c oxidoreductase (cytochrome b-c1 complex, complex III, CIII), resulting in different assemblies (supercomplex SCI(1)III(2)IV(1) and megacomplex MCI(2)III(2)IV(2)).

The protein resides in the mitochondrion inner membrane. It catalyses the reaction 4 Fe(II)-[cytochrome c] + O2 + 8 H(+)(in) = 4 Fe(III)-[cytochrome c] + 2 H2O + 4 H(+)(out). Functionally, component of the cytochrome c oxidase, the last enzyme in the mitochondrial electron transport chain which drives oxidative phosphorylation. The respiratory chain contains 3 multisubunit complexes succinate dehydrogenase (complex II, CII), ubiquinol-cytochrome c oxidoreductase (cytochrome b-c1 complex, complex III, CIII) and cytochrome c oxidase (complex IV, CIV), that cooperate to transfer electrons derived from NADH and succinate to molecular oxygen, creating an electrochemical gradient over the inner membrane that drives transmembrane transport and the ATP synthase. Cytochrome c oxidase is the component of the respiratory chain that catalyzes the reduction of oxygen to water. Electrons originating from reduced cytochrome c in the intermembrane space (IMS) are transferred via the dinuclear copper A center (CU(A)) of subunit 2 and heme A of subunit 1 to the active site in subunit 1, a binuclear center (BNC) formed by heme A3 and copper B (CU(B)). The BNC reduces molecular oxygen to 2 water molecules using 4 electrons from cytochrome c in the IMS and 4 protons from the mitochondrial matrix. This chain is Cytochrome c oxidase subunit 3 (MT-CO3), found in Gazella leptoceros (Sand gazelle).